We begin with the raw amino-acid sequence, 229 residues long: Heptaprenylglyceryl phosphate synthase (229 aa).

K12 serves as a coordination point for sn-glycerol 1-phosphate. Mg(2+) is bound by residues D14 and S40. Residues 159-164 (YLEYSG), G189, and 209-210 (GN) contribute to the sn-glycerol 1-phosphate site.

It belongs to the GGGP/HepGP synthase family. Group I subfamily. As to quaternary structure, homodimer. It depends on Mg(2+) as a cofactor.

The catalysed reaction is sn-glycerol 1-phosphate + all-trans-heptaprenyl diphosphate = 3-heptaprenyl-sn-glycero-1-phosphate + diphosphate. It participates in membrane lipid metabolism; glycerophospholipid metabolism. Prenyltransferase that catalyzes in vivo the transfer of the heptaprenyl moiety of heptaprenyl pyrophosphate (HepPP; 35 carbon atoms) to the C3 hydroxyl of sn-glycerol-1-phosphate (G1P), producing heptaprenylglyceryl phosphate (HepGP). This reaction is an ether-bond-formation step in the biosynthesis of archaea-type G1P-based membrane lipids found in Bacillales. The sequence is that of Heptaprenylglyceryl phosphate synthase from Bacillus velezensis (strain DSM 23117 / BGSC 10A6 / LMG 26770 / FZB42) (Bacillus amyloliquefaciens subsp. plantarum).